Here is a 416-residue protein sequence, read N- to C-terminus: Tyrosine aminotransferase (416 aa).

Lys-253 carries the post-translational modification N6-(pyridoxal phosphate)lysine.

It belongs to the class-I pyridoxal-phosphate-dependent aminotransferase family. Homodimer. Pyridoxal 5'-phosphate is required as a cofactor. In terms of processing, the N-terminus is blocked.

It is found in the cytoplasm. Its subcellular location is the mitochondrion. It carries out the reaction L-tyrosine + 2-oxoglutarate = 3-(4-hydroxyphenyl)pyruvate + L-glutamate. The protein operates within amino-acid degradation; L-phenylalanine degradation; acetoacetate and fumarate from L-phenylalanine: step 2/6. Transaminase involved in tyrosine breakdown. Converts tyrosine to p-hydroxyphenylpyruvate. The sequence is that of Tyrosine aminotransferase from Trypanosoma cruzi.